Consider the following 400-residue polypeptide: Putative cytochrome P450 133B2 (400 aa).

Cys-348 lines the heme pocket.

This sequence belongs to the cytochrome P450 family. Heme serves as cofactor.

This Xylella fastidiosa (strain 9a5c) protein is Putative cytochrome P450 133B2 (cyp133B2).